Reading from the N-terminus, the 213-residue chain is Putative 3-methyladenine DNA glycosylase (213 aa).

Belongs to the DNA glycosylase MPG family.

This chain is Putative 3-methyladenine DNA glycosylase, found in Leifsonia xyli subsp. xyli (strain CTCB07).